A 195-amino-acid chain; its full sequence is Probable septum site-determining protein MinC (195 aa).

It belongs to the MinC family. As to quaternary structure, interacts with MinD and FtsZ.

Functionally, cell division inhibitor that blocks the formation of polar Z ring septums. Rapidly oscillates between the poles of the cell to destabilize FtsZ filaments that have formed before they mature into polar Z rings. Prevents FtsZ polymerization. The sequence is that of Probable septum site-determining protein MinC from Helicobacter pylori (strain G27).